The following is a 591-amino-acid chain: Metalloendopeptidase OPG085 (591 aa).

Histidine 41 provides a ligand contact to Zn(2+). Glutamate 44 is a catalytic residue. Residues histidine 45 and glutamate 112 each contribute to the Zn(2+) site.

It belongs to the peptidase M44 family. Zn(2+) serves as cofactor. Undergoes proteolytic processing during the course of infection. May be cleaved into 46 kDa and 22 kDa products (Potential).

The protein resides in the virion. Probably involved in maturation of some viral proteins by processing them preferentially at Ala-Gly-|-Ser/Thr/Lys motifs. Does not seem to be responsible for the cleavage of major core proteins. This Homo sapiens (Human) protein is Metalloendopeptidase OPG085 (OPG085).